The sequence spans 445 residues: ATP-dependent protease ATPase subunit HslU (445 aa).

ATP contacts are provided by residues I17, G59–E64, D254, E319, and R391.

It belongs to the ClpX chaperone family. HslU subfamily. As to quaternary structure, a double ring-shaped homohexamer of HslV is capped on each side by a ring-shaped HslU homohexamer. The assembly of the HslU/HslV complex is dependent on binding of ATP.

It is found in the cytoplasm. Its function is as follows. ATPase subunit of a proteasome-like degradation complex; this subunit has chaperone activity. The binding of ATP and its subsequent hydrolysis by HslU are essential for unfolding of protein substrates subsequently hydrolyzed by HslV. HslU recognizes the N-terminal part of its protein substrates and unfolds these before they are guided to HslV for hydrolysis. The chain is ATP-dependent protease ATPase subunit HslU from Pseudomonas fluorescens (strain SBW25).